A 500-amino-acid chain; its full sequence is Glycerol kinase (500 aa).

Residue T14 participates in ADP binding. ATP contacts are provided by T14, T15, and S16. T14 contacts sn-glycerol 3-phosphate. Residue R18 coordinates ADP. 3 residues coordinate sn-glycerol 3-phosphate: R84, E85, and Y136. Glycerol-binding residues include R84, E85, and Y136. Phosphohistidine; by HPr is present on H232. D246 provides a ligand contact to sn-glycerol 3-phosphate. 2 residues coordinate glycerol: D246 and Q247. ADP-binding residues include T268 and G311. T268, G311, Q315, and G412 together coordinate ATP. 2 residues coordinate ADP: G412 and N416.

The protein belongs to the FGGY kinase family. Homotetramer and homodimer (in equilibrium). The phosphoenolpyruvate-dependent sugar phosphotransferase system (PTS), including enzyme I, and histidine-containing protein (HPr) are required for the phosphorylation, which leads to the activation of the enzyme.

It catalyses the reaction glycerol + ATP = sn-glycerol 3-phosphate + ADP + H(+). Its pathway is polyol metabolism; glycerol degradation via glycerol kinase pathway; sn-glycerol 3-phosphate from glycerol: step 1/1. Activated by phosphorylation and inhibited by fructose 1,6-bisphosphate (FBP). Key enzyme in the regulation of glycerol uptake and metabolism. Catalyzes the phosphorylation of glycerol to yield sn-glycerol 3-phosphate. The sequence is that of Glycerol kinase from Limosilactobacillus reuteri (strain DSM 20016) (Lactobacillus reuteri).